Reading from the N-terminus, the 131-residue chain is Predicted GPI-anchored protein 26 (131 aa).

The first 18 residues, Met1–Ala18, serve as a signal peptide directing secretion. Residues Asn22 and Asn104 are each glycosylated (N-linked (GlcNAc...) asparagine). The GPI-anchor amidated glycine moiety is linked to residue Gly110. A propeptide spans Ala111–Met131 (removed in mature form).

The protein resides in the cell membrane. GPI-anchored protein involved in proper cell wall integrity. Does not seem to be directly involved in the synthesis of the cell wall. Required for normal virulence in a mouse model of disseminated candidiasis. The protein is Predicted GPI-anchored protein 26 (PGA26) of Candida albicans (strain SC5314 / ATCC MYA-2876) (Yeast).